The chain runs to 554 residues: CTP synthase (554 aa).

Residues 1–270 (MTKFVFVTGG…DGLICDKLRL (270 aa)) are amidoligase domain. Serine 13 serves as a coordination point for CTP. Serine 13 is a binding site for UTP. ATP is bound by residues 14 to 19 (SLGKGI) and aspartate 71. 2 residues coordinate Mg(2+): aspartate 71 and glutamate 144. CTP is bound by residues 151-153 (DIE), 191-196 (KTKPTQ), and lysine 227. UTP is bound by residues 191-196 (KTKPTQ) and lysine 227. Positions 295-548 (TVAMVGKYVD…IAAAKARHQA (254 aa)) constitute a Glutamine amidotransferase type-1 domain. Glycine 357 contributes to the L-glutamine binding site. Catalysis depends on cysteine 384, which acts as the Nucleophile; for glutamine hydrolysis. Residues 385–388 (LGMQ), glutamate 408, and arginine 474 contribute to the L-glutamine site. Catalysis depends on residues histidine 521 and glutamate 523.

The protein belongs to the CTP synthase family. Homotetramer.

The enzyme catalyses UTP + L-glutamine + ATP + H2O = CTP + L-glutamate + ADP + phosphate + 2 H(+). It catalyses the reaction L-glutamine + H2O = L-glutamate + NH4(+). The catalysed reaction is UTP + NH4(+) + ATP = CTP + ADP + phosphate + 2 H(+). Its pathway is pyrimidine metabolism; CTP biosynthesis via de novo pathway; CTP from UDP: step 2/2. Its activity is regulated as follows. Allosterically activated by GTP, when glutamine is the substrate; GTP has no effect on the reaction when ammonia is the substrate. The allosteric effector GTP functions by stabilizing the protein conformation that binds the tetrahedral intermediate(s) formed during glutamine hydrolysis. Inhibited by the product CTP, via allosteric rather than competitive inhibition. Its function is as follows. Catalyzes the ATP-dependent amination of UTP to CTP with either L-glutamine or ammonia as the source of nitrogen. Regulates intracellular CTP levels through interactions with the four ribonucleotide triphosphates. The chain is CTP synthase from Verminephrobacter eiseniae (strain EF01-2).